A 592-amino-acid chain; its full sequence is Aspartate--tRNA(Asp/Asn) ligase (592 aa).

Residue glutamate 175 coordinates L-aspartate. The aspartate stretch occupies residues 199-202 (QLFK). Residue arginine 221 participates in L-aspartate binding. ATP is bound by residues 221–223 (RDE) and glutamine 230. Residue histidine 450 coordinates L-aspartate. Glutamate 483 lines the ATP pocket. An L-aspartate-binding site is contributed by arginine 490. Position 535-538 (535-538 (GLDR)) interacts with ATP.

The protein belongs to the class-II aminoacyl-tRNA synthetase family. Type 1 subfamily. In terms of assembly, homodimer.

It is found in the cytoplasm. It carries out the reaction tRNA(Asx) + L-aspartate + ATP = L-aspartyl-tRNA(Asx) + AMP + diphosphate. Aspartyl-tRNA synthetase with relaxed tRNA specificity since it is able to aspartylate not only its cognate tRNA(Asp) but also tRNA(Asn). Reaction proceeds in two steps: L-aspartate is first activated by ATP to form Asp-AMP and then transferred to the acceptor end of tRNA(Asp/Asn). The protein is Aspartate--tRNA(Asp/Asn) ligase of Acinetobacter baumannii (strain AB307-0294).